Consider the following 145-residue polypeptide: Procyclic form-specific polypeptide B-alpha (145 aa).

Positions 1-27 (MAPRSLYLLAVLLFSANLFAGVGFAAA) are cleaved as a signal peptide. Positions 28-127 (AEGPEDKGLT…PEPEPGAATL (100 aa)) are disordered. Basic and acidic residues predominate over residues 31-52 (PEDKGLTKGGKGKGEKGTKVGA). Repeat copies occupy residues 59–60 (DP), 61–62 (DP), 63–64 (EP), 65–66 (EP), 67–68 (EP), 69–70 (EP), 71–72 (EP), 73–74 (EP), 75–76 (EP), 77–78 (EP), 79–80 (EP), 81–82 (EP), 83–84 (EP), 85–86 (EP), 87–88 (EP), 89–90 (EP), 91–92 (EP), 93–94 (EP), 95–96 (EP), 97–98 (EP), 99–100 (EP), 101–102 (EP), 103–104 (EP), 105–106 (EP), 107–108 (EP), 109–110 (EP), 111–112 (EP), 113–114 (EP), 115–116 (EP), 117–118 (EP), 119–120 (EP), and 121–122 (EP). Residues 59–122 (DPDPEPEPEP…EPEPEPEPEP (64 aa)) form a 32 X 2 AA tandem repeats of [DE]-P region. The segment covering 60–120 (PDPEPEPEPE…EPEPEPEPEP (61 aa)) has biased composition (acidic residues). Glycine 123 is lipidated: GPI-anchor amidated glycine. Residues 124–145 (AATLKSVALPFAIAAAALVAAF) constitute a propeptide that is removed on maturation.

Its subcellular location is the cell membrane. Functionally, major surface antigen of procyclic forms. The chain is Procyclic form-specific polypeptide B-alpha (PARPB) from Trypanosoma brucei brucei.